We begin with the raw amino-acid sequence, 670 residues long: Transcriptional regulatory protein DOT6 (670 aa).

Over residues M1 to E44 the composition is skewed to polar residues. A disordered region spans residues M1 to Q78. Residues S45 to S74 show a composition bias toward low complexity. Residues N67 to L121 form the HTH myb-type domain. Residues W94–K117 constitute a DNA-binding region (H-T-H motif). Residues H226–K242 show a composition bias toward basic residues. Disordered stretches follow at residues H226 to F250, T293 to R332, H406 to T436, and A483 to L659. S245 and S247 each carry phosphoserine. Low complexity-rich tracts occupy residues P295 to S307 and N316 to R332. The span at S425–T436 shows a compositional bias: polar residues. S487 carries the post-translational modification Phosphoserine. T489 carries the post-translational modification Phosphothreonine. S491 is subject to Phosphoserine. Basic and acidic residues predominate over residues D512 to V522. Composition is skewed to low complexity over residues S544 to D561 and T587 to T598. Over residues M599–P608 the composition is skewed to polar residues. Residues I622–L659 show a composition bias toward low complexity.

Belongs to the DOT6 family. In terms of assembly, component of the RPD3C(L) complex composed of at least ASH1, CTI6, DEP1, DOT6, PHO23, RPD3, RXT2, RXT3, SAP30, SDS3, SIN3, TOD6; UME1 and UME6.

Its subcellular location is the nucleus. Its function is as follows. Component of the RPD3 histone deacetylase complex RPD3C(L) responsible for the deacetylation of lysine residues on the N-terminal part of the core histones (H2A, H2B, H3 and H4). Histone deacetylation gives a tag for epigenetic repression and plays an important role in transcriptional regulation, cell cycle progression and developmental events. DOT6 binds to sequences containing the core CGATG, which resembles the PAC (Polymerase A and C) motif. This Saccharomyces cerevisiae (strain ATCC 204508 / S288c) (Baker's yeast) protein is Transcriptional regulatory protein DOT6 (DOT6).